We begin with the raw amino-acid sequence, 280 residues long: Dolichyl-diphosphooligosaccharide--protein glycosyltransferase subunit 2 (280 aa).

An N-terminal signal peptide occupies residues 1–16; sequence MKLLLVLLTIASVALA. Topologically, residues 17–187 are lumenal; it reads AVDDVAVNNF…FRQPEKRPSA (171 aa). A helical membrane pass occupies residues 188-208; it reads LISDLFTIICLSPLLILVVLW. The Cytoplasmic portion of the chain corresponds to 209-222; it reads SQVGINFQNAPASP. Residues 223–243 form a helical membrane-spanning segment; sequence WVPIFHVGLIGIFGIYFMFWV. Position 244 (Q244) is a topological domain, lumenal. The chain crosses the membrane as a helical span at residues 245 to 265; it reads FDMFVTLKYLAVLGFLTFVAG. Residues 266–280 are Cytoplasmic-facing; it reads NRVLRAISESKQKSE.

This sequence belongs to the SWP1 family. Component of the oligosaccharyltransferase (OST) complex.

It localises to the endoplasmic reticulum membrane. The protein operates within protein modification; protein glycosylation. In terms of biological role, subunit of the oligosaccharyl transferase (OST) complex that catalyzes the initial transfer of a defined glycan (Glc(3)Man(9)GlcNAc(2) in eukaryotes) from the lipid carrier dolichol-pyrophosphate to an asparagine residue within an Asn-X-Ser/Thr consensus motif in nascent polypeptide chains, the first step in protein N-glycosylation. N-glycosylation occurs cotranslationally and the complex associates with the Sec61 complex at the channel-forming translocon complex that mediates protein translocation across the endoplasmic reticulum (ER). All subunits are required for a maximal enzyme activity. The sequence is that of Dolichyl-diphosphooligosaccharide--protein glycosyltransferase subunit 2 from Caenorhabditis elegans.